A 222-amino-acid chain; its full sequence is S-crystallin SL20-1 (222 aa).

Positions Pro-2–Gly-80 constitute a GST N-terminal domain. Positions Asn-82–Trp-222 constitute a GST C-terminal domain.

The protein belongs to the GST superfamily. In terms of tissue distribution, lens.

Functionally, S-crystallins are structural components of squids and octopi eye lens. Contains relatively little if any GST activity. This chain is S-crystallin SL20-1, found in Nototodarus sloanii (Wellington flying squid).